The sequence spans 163 residues: Large ribosomal subunit protein uL13m (163 aa).

S2 bears the N-acetylserine mark. Residues 2 to 4 constitute a propeptide that is removed on maturation; it reads SQK.

It belongs to the universal ribosomal protein uL13 family. In terms of assembly, component of the mitochondrial large ribosomal subunit (mt-LSU). Mature yeast 74S mitochondrial ribosomes consist of a small (37S) and a large (54S) subunit. The 37S small subunit contains a 15S ribosomal RNA (15S mt-rRNA) and 34 different proteins. The 54S large subunit contains a 21S rRNA (21S mt-rRNA) and 46 different proteins.

The protein localises to the mitochondrion. Functionally, component of the mitochondrial ribosome (mitoribosome), a dedicated translation machinery responsible for the synthesis of mitochondrial genome-encoded proteins, including at least some of the essential transmembrane subunits of the mitochondrial respiratory chain. The mitoribosomes are attached to the mitochondrial inner membrane and translation products are cotranslationally integrated into the membrane. In Saccharomyces cerevisiae (strain ATCC 204508 / S288c) (Baker's yeast), this protein is Large ribosomal subunit protein uL13m (MRPL23).